The chain runs to 99 residues: NADH-quinone oxidoreductase subunit K (99 aa).

A run of 3 helical transmembrane segments spans residues 3 to 23 (PANY…GVLL), 28 to 48 (IVMF…FVTF), and 59 to 79 (MIAF…LAII).

This sequence belongs to the complex I subunit 4L family. In terms of assembly, NDH-1 is composed of 14 different subunits. Subunits NuoA, H, J, K, L, M, N constitute the membrane sector of the complex.

The protein localises to the cell membrane. It carries out the reaction a quinone + NADH + 5 H(+)(in) = a quinol + NAD(+) + 4 H(+)(out). Its function is as follows. NDH-1 shuttles electrons from NADH, via FMN and iron-sulfur (Fe-S) centers, to quinones in the respiratory chain. The immediate electron acceptor for the enzyme in this species is believed to be a menaquinone. Couples the redox reaction to proton translocation (for every two electrons transferred, four hydrogen ions are translocated across the cytoplasmic membrane), and thus conserves the redox energy in a proton gradient. The chain is NADH-quinone oxidoreductase subunit K from Mycobacterium marinum (strain ATCC BAA-535 / M).